The primary structure comprises 546 residues: (+)-epi-alpha-bisabolol synthase (546 aa).

Residues aspartate 297, aspartate 301, aspartate 441, threonine 445, and glutamate 449 each coordinate Mg(2+). Positions 297 to 301 (DDIYD) match the DDXXD motif motif.

The protein belongs to the terpene synthase family. The cofactor is Mg(2+).

It catalyses the reaction (2E,6E)-farnesyl diphosphate + H2O = (+)-epi-alpha-bisabolol + diphosphate. Its pathway is secondary metabolite biosynthesis; terpenoid biosynthesis. In terms of biological role, sesquiterpene synthase involved in the biosynthesis of (+)-epi-alpha-bisabolol, a precursor of the natural sweetner hernandulcin. This Phyla dulcis (Aztec sweet herb) protein is (+)-epi-alpha-bisabolol synthase.